A 262-amino-acid polypeptide reads, in one-letter code: Type II pantothenate kinase (262 aa).

7–14 (DAGGSLVK) contacts ATP. Glutamate 71 acts as the Proton acceptor in catalysis. Residues threonine 101, 119 to 123 (GGLLT), and tyrosine 135 each bind ATP.

The protein belongs to the type II pantothenate kinase family. As to quaternary structure, homodimer.

It is found in the cytoplasm. It carries out the reaction (R)-pantothenate + ATP = (R)-4'-phosphopantothenate + ADP + H(+). Its pathway is cofactor biosynthesis; coenzyme A biosynthesis; CoA from (R)-pantothenate: step 1/5. In terms of biological role, catalyzes the phosphorylation of pantothenate (Pan), the first step in CoA biosynthesis. The protein is Type II pantothenate kinase of Oceanobacillus iheyensis (strain DSM 14371 / CIP 107618 / JCM 11309 / KCTC 3954 / HTE831).